The primary structure comprises 349 residues: Small ribosomal subunit biogenesis GTPase RsgA 2 (349 aa).

The 156-residue stretch at 97-252 (AEQLIATNVD…IIDTPGMREL (156 aa)) folds into the CP-type G domain. Residues 142-145 (TKAD) and 194-202 (GSSGVGKST) each bind GTP. Positions 275, 280, 282, and 288 each coordinate Zn(2+).

This sequence belongs to the TRAFAC class YlqF/YawG GTPase family. RsgA subfamily. As to quaternary structure, monomer. Associates with 30S ribosomal subunit, binds 16S rRNA. Zn(2+) serves as cofactor.

Its subcellular location is the cytoplasm. Its function is as follows. One of several proteins that assist in the late maturation steps of the functional core of the 30S ribosomal subunit. Helps release RbfA from mature subunits. May play a role in the assembly of ribosomal proteins into the subunit. Circularly permuted GTPase that catalyzes slow GTP hydrolysis, GTPase activity is stimulated by the 30S ribosomal subunit. The polypeptide is Small ribosomal subunit biogenesis GTPase RsgA 2 (Vibrio vulnificus (strain CMCP6)).